Here is a 275-residue protein sequence, read N- to C-terminus: 4-diphosphocytidyl-2-C-methyl-D-erythritol kinase (275 aa).

K14 is an active-site residue. 98–108 (PMGAGLGGGSS) contacts ATP. D140 is a catalytic residue.

This sequence belongs to the GHMP kinase family. IspE subfamily.

It catalyses the reaction 4-CDP-2-C-methyl-D-erythritol + ATP = 4-CDP-2-C-methyl-D-erythritol 2-phosphate + ADP + H(+). The protein operates within isoprenoid biosynthesis; isopentenyl diphosphate biosynthesis via DXP pathway; isopentenyl diphosphate from 1-deoxy-D-xylulose 5-phosphate: step 3/6. In terms of biological role, catalyzes the phosphorylation of the position 2 hydroxy group of 4-diphosphocytidyl-2C-methyl-D-erythritol. In Francisella tularensis subsp. novicida (strain U112), this protein is 4-diphosphocytidyl-2-C-methyl-D-erythritol kinase.